The sequence spans 320 residues: Cilia- and flagella-associated protein 77 (320 aa).

Positions 1 to 27 (MPEARSSGPDLTRWRKQQQPVRRTVSQ) are disordered. Residues 17–27 (QQQPVRRTVSQ) are compositionally biased toward polar residues.

The protein belongs to the CFAP77 family. Microtubule inner protein component of sperm flagellar doublet microtubules. Expressed in airway epithelial cells.

It is found in the cytoplasm. It localises to the cytoskeleton. The protein localises to the cilium axoneme. Its subcellular location is the flagellum axoneme. In terms of biological role, microtubule inner protein (MIP) part of the dynein-decorated doublet microtubules (DMTs) in cilia axoneme, which is required for motile cilia beating. The polypeptide is Cilia- and flagella-associated protein 77 (Homo sapiens (Human)).